The chain runs to 285 residues: Nucleotide-binding protein Cphy_0331 (285 aa).

8 to 15 (GMSGAGKS) lines the ATP pocket. 59 to 62 (DIRS) contributes to the GTP binding site.

Belongs to the RapZ-like family.

Displays ATPase and GTPase activities. This chain is Nucleotide-binding protein Cphy_0331, found in Lachnoclostridium phytofermentans (strain ATCC 700394 / DSM 18823 / ISDg) (Clostridium phytofermentans).